Consider the following 177-residue polypeptide: DNA repair protein RAD33 (177 aa).

The residue at position 2 (Ser2) is an N-acetylserine. Residue Lys19 forms a Glycyl lysine isopeptide (Lys-Gly) (interchain with G-Cter in ubiquitin) linkage.

It localises to the nucleus. Its function is as follows. Involved in nucleotide excision repair (NER) of damaged DNA. Required for the repair of RNA polymerase I-transcribed rDNA and RNA polymerase II-transcribed DNA regions. May have a role in stabilizing the DNA repair proteins RAD4 and RAD34. The protein is DNA repair protein RAD33 (RAD33) of Saccharomyces cerevisiae (strain ATCC 204508 / S288c) (Baker's yeast).